The primary structure comprises 306 residues: Mitochondrial substrate carrier family protein ucpA (306 aa).

The Mitochondrial intermembrane portion of the chain corresponds to 1 to 15 (MSVNLNNNKNNKNKV). Solcar repeat units follow at residues 13 to 103 (NKVA…ISNA), 112 to 204 (YFFL…CKNL), and 211 to 301 (DGIY…FKKL). The chain crosses the membrane as a helical span at residues 16–36 (AIGFISGSLASICATTVTNPI). Over 37-83 (ELVKTRLQLQGELQLSQRIYNGVWDAFKQIYKTEGIRGLQSGLIPAY) the chain is Mitochondrial matrix. Residues 84–103 (FSQATMQGIRLGSFDLISNA) form a helical membrane-spanning segment. Residues 104 to 117 (LGAKPNQDYFFLKN) lie on the Mitochondrial intermembrane side of the membrane. The helical transmembrane segment at 118 to 138 (LLAGATAGAIGAAAGSPFDLV) threads the bilayer. Topologically, residues 139-174 (KVRMQAANMYKNDPQFVGYSSSFAAFKQIIQKEGFK) are mitochondrial matrix. A helical transmembrane segment spans residues 175 to 195 (GLTRGMLTSAQRTAVGSAIQL). Residues 196–211 (STYGSCKNLVLNFVDD) lie on the Mitochondrial intermembrane side of the membrane. The helical transmembrane segment at 212–232 (GIYAYIISSMVAGFIVTFGMN) threads the bilayer. Residues 233-276 (PFDVARTRLYFQGKGNSHGEIYKGLMDCVYKTVKKEGFGAVYKG) are Mitochondrial matrix-facing. A helical membrane pass occupies residues 277 to 295 (FWAHYLRLGPHTILTLVFW). Residues 296–306 (EQFKKLFSGEL) lie on the Mitochondrial intermembrane side of the membrane.

It belongs to the mitochondrial carrier (TC 2.A.29) family.

Its subcellular location is the mitochondrion inner membrane. In terms of biological role, mitochondrial solute carriers shuttle metabolites, nucleotides, and cofactors through the mitochondrial inner membrane. Transports oxaloacetate and sulfate. In Dictyostelium discoideum (Social amoeba), this protein is Mitochondrial substrate carrier family protein ucpA (ucpA).